We begin with the raw amino-acid sequence, 806 residues long: Glycerol-3-phosphate acyltransferase (806 aa).

Positions 305–310 (CHRSHM) match the HXXXXD motif motif.

The protein belongs to the GPAT/DAPAT family.

The protein resides in the cell inner membrane. The enzyme catalyses sn-glycerol 3-phosphate + an acyl-CoA = a 1-acyl-sn-glycero-3-phosphate + CoA. It functions in the pathway phospholipid metabolism; CDP-diacylglycerol biosynthesis; CDP-diacylglycerol from sn-glycerol 3-phosphate: step 1/3. The chain is Glycerol-3-phosphate acyltransferase from Escherichia fergusonii (strain ATCC 35469 / DSM 13698 / CCUG 18766 / IAM 14443 / JCM 21226 / LMG 7866 / NBRC 102419 / NCTC 12128 / CDC 0568-73).